The chain runs to 281 residues: Shikimate dehydrogenase (NADP(+)) (281 aa).

Residues 14–16 (SRS) and Thr61 contribute to the shikimate site. Catalysis depends on Lys65, which acts as the Proton acceptor. The shikimate site is built by Asn86 and Asp101. Residues 127–131 (GAGGA), 151–156 (NRTLAR), and Val216 each bind NADP(+). Residue Tyr218 participates in shikimate binding. Gly239 is a binding site for NADP(+).

It belongs to the shikimate dehydrogenase family. In terms of assembly, homodimer.

The enzyme catalyses shikimate + NADP(+) = 3-dehydroshikimate + NADPH + H(+). It participates in metabolic intermediate biosynthesis; chorismate biosynthesis; chorismate from D-erythrose 4-phosphate and phosphoenolpyruvate: step 4/7. Functionally, involved in the biosynthesis of the chorismate, which leads to the biosynthesis of aromatic amino acids. Catalyzes the reversible NADPH linked reduction of 3-dehydroshikimate (DHSA) to yield shikimate (SA). The polypeptide is Shikimate dehydrogenase (NADP(+)) (Azorhizobium caulinodans (strain ATCC 43989 / DSM 5975 / JCM 20966 / LMG 6465 / NBRC 14845 / NCIMB 13405 / ORS 571)).